A 625-amino-acid polypeptide reads, in one-letter code: 1-deoxy-D-xylulose-5-phosphate synthase 1 (625 aa).

Thiamine diphosphate contacts are provided by residues His-74 and 115 to 117 (GHT). Residue Asp-146 coordinates Mg(2+). Residues 147–148 (GS), Asn-175, Tyr-286, and Glu-368 each bind thiamine diphosphate. Asn-175 provides a ligand contact to Mg(2+).

Belongs to the transketolase family. DXPS subfamily. In terms of assembly, homodimer. Mg(2+) is required as a cofactor. The cofactor is thiamine diphosphate.

The enzyme catalyses D-glyceraldehyde 3-phosphate + pyruvate + H(+) = 1-deoxy-D-xylulose 5-phosphate + CO2. Its pathway is metabolic intermediate biosynthesis; 1-deoxy-D-xylulose 5-phosphate biosynthesis; 1-deoxy-D-xylulose 5-phosphate from D-glyceraldehyde 3-phosphate and pyruvate: step 1/1. Its function is as follows. Catalyzes the acyloin condensation reaction between C atoms 2 and 3 of pyruvate and glyceraldehyde 3-phosphate to yield 1-deoxy-D-xylulose-5-phosphate (DXP). The polypeptide is 1-deoxy-D-xylulose-5-phosphate synthase 1 (Geobacter metallireducens (strain ATCC 53774 / DSM 7210 / GS-15)).